We begin with the raw amino-acid sequence, 357 residues long: 3-isopropylmalate dehydrogenase, chloroplastic (357 aa).

The N-terminal 29 residues, 1–29 (MALQIAKRLLRCRADSVASSVRFFDRTFT), are a transit peptide targeting the chloroplast. Substrate-binding residues include arginine 120, arginine 130, arginine 151, and aspartate 238. Mg(2+) is bound by residues aspartate 238, aspartate 262, and aspartate 266. NAD(+) is bound at residue 296–308 (GSAPDIAGKNLAN).

This sequence belongs to the isocitrate and isopropylmalate dehydrogenases family. As to quaternary structure, homodimer. The cofactor is Mg(2+). Mn(2+) is required as a cofactor.

It is found in the plastid. It localises to the chloroplast. It carries out the reaction (2R,3S)-3-isopropylmalate + NAD(+) = 4-methyl-2-oxopentanoate + CO2 + NADH. It functions in the pathway amino-acid biosynthesis; L-leucine biosynthesis; L-leucine from 3-methyl-2-oxobutanoate: step 3/4. Its function is as follows. Catalyzes the oxidation of 3-carboxy-2-hydroxy-4-methylpentanoate (3-isopropylmalate) to 3-carboxy-4-methyl-2-oxopentanoate. The product decarboxylates to 4-methyl-2 oxopentanoate. This chain is 3-isopropylmalate dehydrogenase, chloroplastic, found in Solanum tuberosum (Potato).